The sequence spans 381 residues: Class E basic helix-loop-helix protein 22 (381 aa).

Disordered stretches follow at residues Arg30–Gly94, Arg135–Gly154, and His188–Ala242. Over residues Gly82–Gly94 the composition is skewed to gly residues. Positions Gly198–Gly225 are enriched in gly residues. The 55-residue stretch at Ala242–Gln296 folds into the bHLH domain.

In terms of assembly, interacts with PRDM8. As to expression, brain-specific, with the highest expression in the cerebellum.

The protein localises to the nucleus. In terms of biological role, inhibits DNA binding of TCF3/E47 homodimers and TCF3 (E47)/NEUROD1 heterodimers and acts as a strong repressor of Neurod1 and Myod-responsive genes, probably by heterodimerization with class a basic helix-loop-helix factors. Despite the presence of an intact basic domain, does not bind to DNA. In the brain, may function as an area-specific transcription factor that regulates the postmitotic acquisition of area identities and elucidate the genetic hierarchy between progenitors and postmitotic neurons driving neocortical arealization. May be required for the survival of a specific population of inhibitory neurons in the superficial laminae of the spinal cord dorsal horn that may regulate pruritis. Seems to play a crucial role in the retinogenesis, in the specification of amacrine and bipolar subtypes. Forms with PRDM8 a transcriptional repressor complex controlling genes involved in neural development and neuronal differentiation. This Homo sapiens (Human) protein is Class E basic helix-loop-helix protein 22 (BHLHE22).